The chain runs to 238 residues: MAEPVYRRVVVKLSGEYLAGPHSFGIDQATVDRIADDLIAAQKLGIEIAVVVGGGNMVRGVEVSSQGVSRPTGDTMGMLATVMNCLALEAAIQRKGAPAQALSAFVMPQVCELFTRAAAHKALAEGRIVVLGGGTGNPYFTTDTTAVLRAAEIGAQAVLKATNVDGVYSADPKKDPAAKRFDRLTHSQAIEGGYKVMDATAFALARETSLPIIVFSIAEPGAIGAMLRGEGRGTIVAG.

12-15 (KLSG) lines the ATP pocket. Gly54 contributes to the UMP binding site. 2 residues coordinate ATP: Gly55 and Arg59. UMP contacts are provided by residues Asp74 and 135–142 (TGNPYFTT). The ATP site is built by Thr162, Asn163, Tyr168, and Asp171.

Belongs to the UMP kinase family. In terms of assembly, homohexamer.

The protein resides in the cytoplasm. It catalyses the reaction UMP + ATP = UDP + ADP. The protein operates within pyrimidine metabolism; CTP biosynthesis via de novo pathway; UDP from UMP (UMPK route): step 1/1. Inhibited by UTP. In terms of biological role, catalyzes the reversible phosphorylation of UMP to UDP. The chain is Uridylate kinase from Bradyrhizobium sp. (strain BTAi1 / ATCC BAA-1182).